A 67-amino-acid chain; its full sequence is Ferredoxin FdxE (67 aa).

[3Fe-4S] cluster-binding residues include cysteine 10, valine 11, glutamine 15, cysteine 16, and cysteine 54.

Interacts with the cytochrome P450 143 with high affinity (Kd=84 nM). It depends on [3Fe-4S] cluster as a cofactor.

Ferredoxin that is the redox partner of cytochrome CYP143, a cytochrome P450 encoded by an adjacent gene. The sequence is that of Ferredoxin FdxE from Mycobacterium tuberculosis (strain ATCC 25618 / H37Rv).